The sequence spans 321 residues: Protein APA1 (321 aa).

The interval 50-70 is disordered; sequence SLIEKPERGQTPEGEDPLGKP. Residue Lys-54 participates in substrate binding. A Phosphothreonine modification is found at Thr-60. Residues 93–94, Asn-145, and 151–154 each bind substrate; these read NK and GSSL. His-158 acts as the Nucleophile in catalysis. Substrate-binding positions include Gln-160, 273-275, Met-280, and Lys-284; that span reads NST.

Belongs to the ATP adenylyltransferase family. Monomer. Requires a divalent metal cation as cofactor. The N-terminus is blocked.

It localises to the cytoplasm. It is found in the nucleus. The catalysed reaction is ADP + ATP + H(+) = P(1),P(4)-bis(5'-adenosyl) tetraphosphate + phosphate. It carries out the reaction sulfate + ADP + H(+) = adenosine 5'-phosphosulfate + phosphate. Functionally, ap4A phosphorylase catalyzes the phosphorolytic degradation of bis(5'-adenosyl) tetraphosphate (Ap4A) into ADP and ATP. Can also use other Np4N' nucleotides (where N and N' stand for A,C,G or U) as substrates with equal efficiency. Cannot catalyze the reverse reaction. Additionally, this enzyme can also catalyze the phosphorolytic degradation of adenosine 5'-phosphosulfate (AMPS) into ADP and sulfate, the reversible exchange reaction between inorganic phosphate and the beta-phosphate of a nucleoside diphosphate (NDP), and the synthesis of Ap4A from AMPS plus ATP. This Saccharomyces cerevisiae (strain ATCC 204508 / S288c) (Baker's yeast) protein is Protein APA1.